Here is a 336-residue protein sequence, read N- to C-terminus: Tryptophan--tRNA ligase (336 aa).

ATP is bound by residues glutamine 13–serine 15 and glycine 21–asparagine 22. The 'HIGH' region signature appears at proline 14 to asparagine 22. Aspartate 140 provides a ligand contact to L-tryptophan. Residues glycine 152–aspartate 154, isoleucine 191, and lysine 200–serine 204 contribute to the ATP site. Positions lysine 200–serine 204 match the 'KMSKS' region motif.

It belongs to the class-I aminoacyl-tRNA synthetase family. As to quaternary structure, homodimer.

The protein resides in the cytoplasm. The enzyme catalyses tRNA(Trp) + L-tryptophan + ATP = L-tryptophyl-tRNA(Trp) + AMP + diphosphate + H(+). Functionally, catalyzes the attachment of tryptophan to tRNA(Trp). The sequence is that of Tryptophan--tRNA ligase from Buchnera aphidicola subsp. Schizaphis graminum (strain Sg).